Consider the following 82-residue polypeptide: Cytochrome b559 subunit alpha (82 aa).

The chain crosses the membrane as a helical span at residues 22 to 36 (VIHAVTLPSIFLAGY). A heme-binding site is contributed by H24.

Belongs to the PsbE/PsbF family. Heterodimer of an alpha subunit and a beta subunit. PSII is composed of 1 copy each of membrane proteins PsbA, PsbB, PsbC, PsbD, PsbE, PsbF, PsbH, PsbI, PsbJ, PsbK, PsbL, PsbM, PsbT, PsbX, PsbY, Psb30/Ycf12, peripheral proteins PsbO, CyanoQ (PsbQ), PsbU, PsbV and a large number of cofactors. It forms dimeric complexes. It depends on heme b as a cofactor.

The protein localises to the cellular thylakoid membrane. This b-type cytochrome is tightly associated with the reaction center of photosystem II (PSII). PSII is a light-driven water:plastoquinone oxidoreductase that uses light energy to abstract electrons from H(2)O, generating O(2) and a proton gradient subsequently used for ATP formation. It consists of a core antenna complex that captures photons, and an electron transfer chain that converts photonic excitation into a charge separation. This chain is Cytochrome b559 subunit alpha, found in Prochlorococcus marinus (strain MIT 9303).